The chain runs to 361 residues: Spermidine/putrescine import ATP-binding protein PotA (361 aa).

An ABC transporter domain is found at 4–234 (LEIKNVVKRF…PKNRFVADFL (231 aa)). 36-43 (GPSGCGKT) provides a ligand contact to ATP.

It belongs to the ABC transporter superfamily. Spermidine/putrescine importer (TC 3.A.1.11.1) family. The complex is composed of two ATP-binding proteins (PotA), two transmembrane proteins (PotB and PotC) and a solute-binding protein (PotD).

It is found in the cell inner membrane. The catalysed reaction is ATP + H2O + polyamine-[polyamine-binding protein]Side 1 = ADP + phosphate + polyamineSide 2 + [polyamine-binding protein]Side 1.. Functionally, part of the ABC transporter complex PotABCD involved in spermidine/putrescine import. Responsible for energy coupling to the transport system. The protein is Spermidine/putrescine import ATP-binding protein PotA of Chromobacterium violaceum (strain ATCC 12472 / DSM 30191 / JCM 1249 / CCUG 213 / NBRC 12614 / NCIMB 9131 / NCTC 9757 / MK).